We begin with the raw amino-acid sequence, 449 residues long: Phosphoglucosamine mutase (449 aa).

Catalysis depends on Ser100, which acts as the Phosphoserine intermediate. 4 residues coordinate Mg(2+): Ser100, Asp241, Asp243, and Asp245. Ser100 carries the phosphoserine modification.

It belongs to the phosphohexose mutase family. Mg(2+) is required as a cofactor. In terms of processing, activated by phosphorylation.

The catalysed reaction is alpha-D-glucosamine 1-phosphate = D-glucosamine 6-phosphate. Its function is as follows. Catalyzes the conversion of glucosamine-6-phosphate to glucosamine-1-phosphate. This Caldicellulosiruptor saccharolyticus (strain ATCC 43494 / DSM 8903 / Tp8T 6331) protein is Phosphoglucosamine mutase.